Reading from the N-terminus, the 92-residue chain is Putative protein pog (92 aa).

This Acute bee paralysis virus (strain Rothamsted) (ABPV) protein is Putative protein pog.